The chain runs to 357 residues: Red-sensitive opsin (357 aa).

Residues 1-49 (MGDQWGDAVFAARRRGDDTTREAAFTYTNSNNTKDPFEGPNYHIAPRWV) lie on the Extracellular side of the membrane. N-linked (GlcNAc...) asparagine glycosylation is present at asparagine 31. Residues 50-74 (YNLATCWMFFVVVASTVTNGLVLVA) form a helical membrane-spanning segment. The Cytoplasmic segment spans residues 75-86 (SAKFKKLRHPLN). A helical transmembrane segment spans residues 87–112 (WILVNLAIADLLETLLASTISVCNQF). Residues 113 to 126 (FGYFILGHPMCVFE) lie on the Extracellular side of the membrane. Cysteines 123 and 200 form a disulfide. The chain crosses the membrane as a helical span at residues 127–146 (GFTVATCGIAGLWSLTVISW). At 147 to 165 (ERWVVVCKPFGNVKFDGKM) the chain is on the cytoplasmic side. The helical transmembrane segment at 166-189 (ATAGIVFTWVWSAVWCAPPIFGWS) threads the bilayer. The Extracellular portion of the chain corresponds to 190–215 (RYWPHGLKTSCGPDVFSGSEDPGVQS). The chain crosses the membrane as a helical span at residues 216–243 (YMIVLMITCCFIPLGIIILCYIAVWWAI). The Cytoplasmic segment spans residues 244 to 265 (RTVAQQQKDSESTQKAEKEVSR). A helical membrane pass occupies residues 266–289 (MVVVMIMAYCFCWGPYTFFACFAA). Residues 290-297 (ANPGYAFH) are Extracellular-facing. Residues 298–322 (PLAAAMPAYFAKSATIYNPVIYVFM) form a helical membrane-spanning segment. Lysine 309 is modified (N6-(retinylidene)lysine). At 323–357 (NRQFRVCIMQLFGKKVDDGSEVSTSKTEVSSVAPA) the chain is on the cytoplasmic side.

This sequence belongs to the G-protein coupled receptor 1 family. Opsin subfamily. In terms of processing, phosphorylated on some or all of the serine and threonine residues present in the C-terminal region. As to expression, the color pigments are found in the cone photoreceptor cells.

It localises to the membrane. Functionally, visual pigments are the light-absorbing molecules that mediate vision. They consist of an apoprotein, opsin, covalently linked to cis-retinal. The chain is Red-sensitive opsin (R007) from Psalidodon fasciatus (Banded astyanax).